The chain runs to 922 residues: Up-regulator of cell proliferation (922 aa).

Positions 1–20 are disordered; sequence MASSGHSDLGEVTSEIKASE. The residue at position 3 (Ser3) is a Phosphoserine. In terms of domain architecture, VLIG-type G spans 680-920; it reads RSRLVVLSAL…NIQQLIELVR (241 aa).

This sequence belongs to the TRAFAC class dynamin-like GTPase superfamily. Very large inducible GTPase (VLIG) family.

The protein resides in the cytoplasm. It localises to the nucleus. In terms of biological role, may be involved in cell cycle progression through the regulation of cyclin D1 expression. This chain is Up-regulator of cell proliferation (URGCP), found in Bos taurus (Bovine).